A 391-amino-acid chain; its full sequence is U-box domain-containing protein 57 (391 aa).

The MIF4G domain occupies 1–178 (MVKNSYVLFA…DLTERLLQVE (178 aa)). Residues 322 to 391 (QPPPSFICPI…LRSAIEELGR (70 aa)) enclose the U-box domain.

It catalyses the reaction S-ubiquitinyl-[E2 ubiquitin-conjugating enzyme]-L-cysteine + [acceptor protein]-L-lysine = [E2 ubiquitin-conjugating enzyme]-L-cysteine + N(6)-ubiquitinyl-[acceptor protein]-L-lysine.. It participates in protein modification; protein ubiquitination. Its function is as follows. Functions as an E3 ubiquitin ligase. This is U-box domain-containing protein 57 (PUB57) from Arabidopsis thaliana (Mouse-ear cress).